A 486-amino-acid polypeptide reads, in one-letter code: Aspartyl/glutamyl-tRNA(Asn/Gln) amidotransferase subunit B (486 aa).

It belongs to the GatB/GatE family. GatB subfamily. Heterotrimer of A, B and C subunits.

The catalysed reaction is L-glutamyl-tRNA(Gln) + L-glutamine + ATP + H2O = L-glutaminyl-tRNA(Gln) + L-glutamate + ADP + phosphate + H(+). It carries out the reaction L-aspartyl-tRNA(Asn) + L-glutamine + ATP + H2O = L-asparaginyl-tRNA(Asn) + L-glutamate + ADP + phosphate + 2 H(+). Allows the formation of correctly charged Asn-tRNA(Asn) or Gln-tRNA(Gln) through the transamidation of misacylated Asp-tRNA(Asn) or Glu-tRNA(Gln) in organisms which lack either or both of asparaginyl-tRNA or glutaminyl-tRNA synthetases. The reaction takes place in the presence of glutamine and ATP through an activated phospho-Asp-tRNA(Asn) or phospho-Glu-tRNA(Gln). In Orientia tsutsugamushi (strain Ikeda) (Rickettsia tsutsugamushi), this protein is Aspartyl/glutamyl-tRNA(Asn/Gln) amidotransferase subunit B.